We begin with the raw amino-acid sequence, 567 residues long: Proline--tRNA ligase (567 aa).

This sequence belongs to the class-II aminoacyl-tRNA synthetase family. ProS type 1 subfamily. Homodimer.

The protein localises to the cytoplasm. The catalysed reaction is tRNA(Pro) + L-proline + ATP = L-prolyl-tRNA(Pro) + AMP + diphosphate. Functionally, catalyzes the attachment of proline to tRNA(Pro) in a two-step reaction: proline is first activated by ATP to form Pro-AMP and then transferred to the acceptor end of tRNA(Pro). As ProRS can inadvertently accommodate and process non-cognate amino acids such as alanine and cysteine, to avoid such errors it has two additional distinct editing activities against alanine. One activity is designated as 'pretransfer' editing and involves the tRNA(Pro)-independent hydrolysis of activated Ala-AMP. The other activity is designated 'posttransfer' editing and involves deacylation of mischarged Ala-tRNA(Pro). The misacylated Cys-tRNA(Pro) is not edited by ProRS. The polypeptide is Proline--tRNA ligase (Geobacillus thermodenitrificans (strain NG80-2)).